A 1091-amino-acid chain; its full sequence is Multiple epidermal growth factor-like domains protein 11 (1091 aa).

Residues 1-18 form the signal peptide; sequence MAPSAVGLLVFLLQAALA. Topologically, residues 19–847 are extracellular; it reads LNPEDPNVCS…SPALGAERHS (829 aa). The 78-residue stretch at 23–100 folds into the EMI domain; that stretch reads DPNVCSHWES…YYENGDFCIP (78 aa). Cystine bridges form between Cys27-Cys88, Cys53-Cys62, Cys87-Cys98, Cys102-Cys117, Cys119-Cys128, Cys145-Cys153, Cys147-Cys160, Cys162-Cys171, Cys184-Cys196, Cys190-Cys203, Cys205-Cys214, Cys227-Cys239, Cys233-Cys246, and Cys248-Cys257. 9 consecutive EGF-like domains span residues 94–129, 142–172, 180–215, 223–258, 266–301, 314–344, 398–433, 441–476, and 484–519; these read NGDFCIPLCTEECMHGRCVSPDTCHCEPGWGGPDCS, SNRCQCQNGALCNPITGACVCAPGFRGWRCE, HGKGCQLLCQCHHGASCDPRTGECLCAPGYTGVYCE, HGAHCELRCPCQNGGTCHHITGECACPPGWTGAVCA, FGQNCSQDCPCHHGGQCDHVTGQCHCTAGYMGDRCQ, SQRCDCHNGGQCSPATGACECEPGYKGPSCQ, YGNGCQLPCTCQNGADCHSITGSCTCAPGFMGEVCA, YGPNCSSVCSCSNGGTCSPVDGSCTCREGWQGLDCS, and WGLNCNETCICANGAACSPFDGSCACTPGWLGDSCE. An N-linked (GlcNAc...) asparagine glycan is attached at Asn269. 15 disulfide bridges follow: Cys270/Cys282, Cys276/Cys289, Cys291/Cys300, Cys317/Cys325, Cys319/Cys332, Cys334/Cys343, Cys402/Cys414, Cys408/Cys421, Cys423/Cys432, Cys445/Cys457, Cys451/Cys464, Cys466/Cys475, Cys488/Cys500, Cys494/Cys507, and Cys509/Cys518. N-linked (GlcNAc...) asparagine glycosylation occurs at Asn530. 6 consecutive EGF-like domains span residues 570-605, 613-650, 658-693, 706-736, 749-779, and 787-822; these read WGPNCSVSCSCENGGSCSPEDGSCECAPGFRGPLCQ, YGHGCAQPCPLCVHSRGPCHHISGICECLPGFSGALCN, FGQDCAQLCSCANNGTCSPIDGSCQCFPGWIGKDCS, FHTCSCHNGASCSAEDGACHCTPGWTGLFCT, GHICQCQNGASCDHITGKCTCRTGFSGRHCE, and FGYGCQQLCECMNNATCDHVTGTCYCSPGFKGIRCD. 18 disulfides stabilise this stretch: Cys574–Cys586, Cys580–Cys593, Cys595–Cys604, Cys617–Cys631, Cys621–Cys638, Cys640–Cys649, Cys662–Cys674, Cys668–Cys681, Cys683–Cys692, Cys709–Cys717, Cys711–Cys724, Cys726–Cys735, Cys752–Cys760, Cys754–Cys767, Cys769–Cys778, Cys791–Cys803, Cys797–Cys810, and Cys812–Cys821. The chain crosses the membrane as a helical span at residues 848–868; that stretch reads VGAVTGIVLLLFLVVVLLGLF. Residues 869–1091 lie on the Cytoplasmic side of the membrane; that stretch reads AWRRRRQKEK…NIYEVGRCLT (223 aa).

Belongs to the MEGF family. Homomer. Does not interact with MEGF10.

Its subcellular location is the cell membrane. The protein localises to the basolateral cell membrane. Its function is as follows. May regulate the mosaic spacing of specific neuron subtypes in the retina through homotypic retinal neuron repulsion. Mosaics provide a mechanism to distribute each cell type evenly across the retina, ensuring that all parts of the visual field have access to a full set of processing elements. The protein is Multiple epidermal growth factor-like domains protein 11 (Megf11) of Mus musculus (Mouse).